A 483-amino-acid polypeptide reads, in one-letter code: Iroquois-class homeodomain protein IRX-5 (483 aa).

The homeobox; TALE-type DNA-binding region spans 113-175 (DPAYRKNATR…NARRRLKKEN (63 aa)). Disordered stretches follow at residues 177–392 (MTWT…QCPF) and 423–442 (GHPG…FNGL). A compositionally biased stretch (acidic residues) spans 186-203 (EDEEEEENIDLEKNDEDE). Composition is skewed to basic and acidic residues over residues 204 to 213 (PQKPEDKGDP) and 250 to 261 (SDFKEPPSEGRL). Composition is skewed to low complexity over residues 266 to 282 (GPPR…AAAR) and 374 to 388 (SRAS…SPSA). S274 is modified (phosphoserine). S464 is modified (phosphoserine).

This sequence belongs to the TALE/IRO homeobox family.

It localises to the nucleus. In terms of biological role, establishes the cardiac repolarization gradient by its repressive actions on the KCND2 potassium-channel gene. Required for retinal cone bipolar cell differentiation. May regulate contrast adaptation in the retina and control specific aspects of visual function in circuits of the mammalian retina. Could be involved in the regulation of both the cell cycle and apoptosis in prostate cancer cells. Involved in craniofacial and gonadal development. Modulates the migration of progenitor cell populations in branchial arches and gonads by repressing CXCL12. This Homo sapiens (Human) protein is Iroquois-class homeodomain protein IRX-5 (IRX5).